The chain runs to 168 residues: Phosphopantetheine adenylyltransferase (168 aa).

Residue serine 9 coordinates substrate. ATP is bound by residues 9 to 10 (SF) and histidine 17. Lysine 41, leucine 73, and arginine 87 together coordinate substrate. Residues 88–90 (GLR), glutamate 98, and 123–129 (YAFLSSS) each bind ATP.

It belongs to the bacterial CoaD family. As to quaternary structure, homohexamer. Mg(2+) serves as cofactor.

It localises to the cytoplasm. It carries out the reaction (R)-4'-phosphopantetheine + ATP + H(+) = 3'-dephospho-CoA + diphosphate. The protein operates within cofactor biosynthesis; coenzyme A biosynthesis; CoA from (R)-pantothenate: step 4/5. Its function is as follows. Reversibly transfers an adenylyl group from ATP to 4'-phosphopantetheine, yielding dephospho-CoA (dPCoA) and pyrophosphate. The protein is Phosphopantetheine adenylyltransferase of Heliobacterium modesticaldum (strain ATCC 51547 / Ice1).